We begin with the raw amino-acid sequence, 591 residues long: Aspartate--tRNA(Asp/Asn) ligase (591 aa).

Glu170 contacts L-aspartate. Residues 194–197 (QLFK) are aspartate. Arg216 serves as a coordination point for L-aspartate. ATP-binding positions include 216–218 (RDE) and Gln225. L-aspartate is bound at residue His448. An ATP-binding site is contributed by Glu482. Residue Arg489 participates in L-aspartate binding. Residue 534 to 537 (GWDR) participates in ATP binding. The segment at 559 to 591 (GGVDPLTDAPAPITEQQRKESGIDVKPEPSKPH) is disordered. A compositionally biased stretch (basic and acidic residues) spans 574-591 (QQRKESGIDVKPEPSKPH).

It belongs to the class-II aminoacyl-tRNA synthetase family. Type 1 subfamily. In terms of assembly, homodimer.

The protein localises to the cytoplasm. The enzyme catalyses tRNA(Asx) + L-aspartate + ATP = L-aspartyl-tRNA(Asx) + AMP + diphosphate. In terms of biological role, aspartyl-tRNA synthetase with relaxed tRNA specificity since it is able to aspartylate not only its cognate tRNA(Asp) but also tRNA(Asn). Reaction proceeds in two steps: L-aspartate is first activated by ATP to form Asp-AMP and then transferred to the acceptor end of tRNA(Asp/Asn). The sequence is that of Aspartate--tRNA(Asp/Asn) ligase from Mycolicibacterium paratuberculosis (strain ATCC BAA-968 / K-10) (Mycobacterium paratuberculosis).